Reading from the N-terminus, the 276-residue chain is Src-like-adapter (276 aa).

Glycine 2 is lipidated: N-myristoyl glycine. Residues 22-82 enclose the SH3 domain; sequence LDSDFLAVLS…PGICVARVYH (61 aa). The SH2 domain maps to 84-175; the sequence is WLFEGLGRDK…GLCCVLTTPC (92 aa). Positions 212–276 are SLA C-terminal; that stretch reads EGTENPLGVD…FFSSPPYFED (65 aa). Serine 253 carries the phosphoserine modification. Tyrosine 273 bears the Phosphotyrosine mark.

As to quaternary structure, interacts with EPHA2, VAV1, LCP2 and PDGFRB. Homodimer. Homodimerization and interaction with phosphorylated CBL occurs via its C-terminal domain. Interacts with phosphorylated proteins ZAP70, CD3Z, SYK and LAT via its SH2 domain. In terms of tissue distribution, expressed in lung and fetal brain. Weakly expressed in heart, adult brain, placenta, liver, skeletal muscle, kidney and pancreas.

The protein localises to the cytoplasm. It localises to the endosome. Adapter protein, which negatively regulates T-cell receptor (TCR) signaling. Inhibits T-cell antigen-receptor induced activation of nuclear factor of activated T-cells. Involved in the negative regulation of positive selection and mitosis of T-cells. May act by linking signaling proteins such as ZAP70 with CBL, leading to a CBL dependent degradation of signaling proteins. In Homo sapiens (Human), this protein is Src-like-adapter (SLA).